Here is a 208-residue protein sequence, read N- to C-terminus: Imidazoleglycerol-phosphate dehydratase (208 aa).

The protein belongs to the imidazoleglycerol-phosphate dehydratase family.

The protein localises to the cytoplasm. The enzyme catalyses D-erythro-1-(imidazol-4-yl)glycerol 3-phosphate = 3-(imidazol-4-yl)-2-oxopropyl phosphate + H2O. Its pathway is amino-acid biosynthesis; L-histidine biosynthesis; L-histidine from 5-phospho-alpha-D-ribose 1-diphosphate: step 6/9. The polypeptide is Imidazoleglycerol-phosphate dehydratase (Anaeromyxobacter dehalogenans (strain 2CP-1 / ATCC BAA-258)).